A 289-amino-acid chain; its full sequence is Protease HtpX homolog (289 aa).

Transmembrane regions (helical) follow at residues 8 to 28 and 29 to 49; these read LALLAALSGLLIAISYWVIGG and SSGLIIGIGLAAVTNLLSWYQ. Residue histidine 132 coordinates Zn(2+). The active site involves glutamate 133. Histidine 136 is a Zn(2+) binding site. The next 2 helical transmembrane spans lie at 151-171 and 183-203; these read VAGAISFLAQMVSYSLWFGGI and LGVLLTVVLAPIAATIIQLAI. Position 208 (glutamate 208) interacts with Zn(2+).

This sequence belongs to the peptidase M48B family. Zn(2+) serves as cofactor.

It is found in the cell inner membrane. This Trichormus variabilis (strain ATCC 29413 / PCC 7937) (Anabaena variabilis) protein is Protease HtpX homolog.